Here is a 227-residue protein sequence, read N- to C-terminus: Cytochrome c oxidase subunit 2 (227 aa).

Over 1 to 14 (MAYPFQLGLQDATS) the chain is Mitochondrial intermembrane. Residues 15–45 (PIMEELMNFHDHTLMIVFLISTLVLYIISLM) form a helical membrane-spanning segment. Residues 46–59 (LTTKLTHTSTMDAQ) lie on the Mitochondrial matrix side of the membrane. The chain crosses the membrane as a helical span at residues 60 to 87 (EVETIWTILPAVILILIALPSLRILYMM). At 88–227 (DEINNPALTV…YFENWSASMI (140 aa)) the chain is on the mitochondrial intermembrane side. Positions 161, 196, 198, 200, 204, and 207 each coordinate Cu cation. Residue Glu198 coordinates Mg(2+). Tyr218 bears the Phosphotyrosine mark.

The protein belongs to the cytochrome c oxidase subunit 2 family. In terms of assembly, component of the cytochrome c oxidase (complex IV, CIV), a multisubunit enzyme composed of 14 subunits. The complex is composed of a catalytic core of 3 subunits MT-CO1, MT-CO2 and MT-CO3, encoded in the mitochondrial DNA, and 11 supernumerary subunits COX4I, COX5A, COX5B, COX6A, COX6B, COX6C, COX7A, COX7B, COX7C, COX8 and NDUFA4, which are encoded in the nuclear genome. The complex exists as a monomer or a dimer and forms supercomplexes (SCs) in the inner mitochondrial membrane with NADH-ubiquinone oxidoreductase (complex I, CI) and ubiquinol-cytochrome c oxidoreductase (cytochrome b-c1 complex, complex III, CIII), resulting in different assemblies (supercomplex SCI(1)III(2)IV(1) and megacomplex MCI(2)III(2)IV(2)). Found in a complex with TMEM177, COA6, COX18, COX20, SCO1 and SCO2. Interacts with TMEM177 in a COX20-dependent manner. Interacts with COX20. Interacts with COX16. The cofactor is Cu cation.

The protein resides in the mitochondrion inner membrane. It carries out the reaction 4 Fe(II)-[cytochrome c] + O2 + 8 H(+)(in) = 4 Fe(III)-[cytochrome c] + 2 H2O + 4 H(+)(out). In terms of biological role, component of the cytochrome c oxidase, the last enzyme in the mitochondrial electron transport chain which drives oxidative phosphorylation. The respiratory chain contains 3 multisubunit complexes succinate dehydrogenase (complex II, CII), ubiquinol-cytochrome c oxidoreductase (cytochrome b-c1 complex, complex III, CIII) and cytochrome c oxidase (complex IV, CIV), that cooperate to transfer electrons derived from NADH and succinate to molecular oxygen, creating an electrochemical gradient over the inner membrane that drives transmembrane transport and the ATP synthase. Cytochrome c oxidase is the component of the respiratory chain that catalyzes the reduction of oxygen to water. Electrons originating from reduced cytochrome c in the intermembrane space (IMS) are transferred via the dinuclear copper A center (CU(A)) of subunit 2 and heme A of subunit 1 to the active site in subunit 1, a binuclear center (BNC) formed by heme A3 and copper B (CU(B)). The BNC reduces molecular oxygen to 2 water molecules using 4 electrons from cytochrome c in the IMS and 4 protons from the mitochondrial matrix. The polypeptide is Cytochrome c oxidase subunit 2 (MT-CO2) (Maxomys surifer (Indomalayan maxomys)).